The sequence spans 840 residues: 9-beta-pimara-7,15-diene synthase, chloroplastic (840 aa).

The transit peptide at 1–56 (MASPMEAVARSSLVLAPRRRRALGLLPAAAAPFVLDCRRRHNGGMRRPHVSFACSA) directs the protein to the chloroplast. 5 residues coordinate Mg(2+): aspartate 589, aspartate 593, asparagine 733, serine 737, and glutamate 741. Positions 589–593 (DDFFD) match the DDXXD motif motif.

It belongs to the terpene synthase family. Mg(2+) is required as a cofactor.

It localises to the plastid. The protein localises to the chloroplast. It carries out the reaction 9alpha-copalyl diphosphate = 9beta-pimara-7,15-diene + diphosphate. In terms of biological role, involved in the biosynthesis of momilactone A and B phytoalexins. Catalyzes the conversion of syn-copalyl diphosphate to the phytoalexin precursor syn-pimara-7,15-diene. The chain is 9-beta-pimara-7,15-diene synthase, chloroplastic from Oryza sativa subsp. indica (Rice).